The primary structure comprises 142 residues: Small ribosomal subunit protein uS12 (142 aa).

Residues 1-30 (MGKTHGMGAARKLKSHRRTQRWADKSYKKS) are disordered. A compositionally biased stretch (basic residues) spans 11 to 20 (RKLKSHRRTQ). Residues 21-30 (RWADKSYKKS) show a composition bias toward basic and acidic residues. The residue at position 61 (Pro61) is a Hydroxyproline.

The protein belongs to the universal ribosomal protein uS12 family.

The protein is Small ribosomal subunit protein uS12 (RPS23) of Euphorbia esula (Leafy spurge).